The sequence spans 184 residues: UPF0398 protein BCB4264_A1614 (184 aa).

The protein belongs to the UPF0398 family.

This is UPF0398 protein BCB4264_A1614 from Bacillus cereus (strain B4264).